Here is a 222-residue protein sequence, read N- to C-terminus: Histidine biosynthesis bifunctional protein HisIE (222 aa).

A phosphoribosyl-AMP cyclohydrolase region spans residues 1–128; the sequence is MQPLSPAFID…SLTLPPPMDA (128 aa). The segment at 129 to 222 is phosphoribosyl-ATP pyrophosphohydrolase; it reads CSELFRVIDQ…ANRRGAPRRN (94 aa).

This sequence in the N-terminal section; belongs to the PRA-CH family. In the C-terminal section; belongs to the PRA-PH family.

It localises to the cytoplasm. It catalyses the reaction 1-(5-phospho-beta-D-ribosyl)-ATP + H2O = 1-(5-phospho-beta-D-ribosyl)-5'-AMP + diphosphate + H(+). The catalysed reaction is 1-(5-phospho-beta-D-ribosyl)-5'-AMP + H2O = 1-(5-phospho-beta-D-ribosyl)-5-[(5-phospho-beta-D-ribosylamino)methylideneamino]imidazole-4-carboxamide. Its pathway is amino-acid biosynthesis; L-histidine biosynthesis; L-histidine from 5-phospho-alpha-D-ribose 1-diphosphate: step 2/9. The protein operates within amino-acid biosynthesis; L-histidine biosynthesis; L-histidine from 5-phospho-alpha-D-ribose 1-diphosphate: step 3/9. The chain is Histidine biosynthesis bifunctional protein HisIE from Prochlorococcus marinus (strain MIT 9313).